The following is an 802-amino-acid chain: Leucine--tRNA ligase (802 aa).

The 'HIGH' region motif lies at 40 to 51 (PYPSGAGLHVGH). Residues 576 to 580 (KMSKS) carry the 'KMSKS' region motif. ATP is bound at residue lysine 579.

It belongs to the class-I aminoacyl-tRNA synthetase family.

Its subcellular location is the cytoplasm. The enzyme catalyses tRNA(Leu) + L-leucine + ATP = L-leucyl-tRNA(Leu) + AMP + diphosphate. This is Leucine--tRNA ligase from Bacillus anthracis (strain A0248).